Reading from the N-terminus, the 49-residue chain is Protein 19.5 (49 aa).

The first 23 residues, 1 to 23 (MFRLLLNLLRHRVTYRFLVVLCA), serve as a signal peptide directing secretion.

This is Protein 19.5 from Escherichia phage T7 (Bacteriophage T7).